A 124-amino-acid polypeptide reads, in one-letter code: Insulin growth factor-like family member 4 (124 aa).

The N-terminal stretch at 1–19 (MVPRISAAIFIFELLGSNS) is a signal peptide. N-linked (GlcNAc...) asparagine glycosylation is found at Asn57 and Asn84.

The protein belongs to the IGFL family. In terms of tissue distribution, detected in the cerebellum.

It is found in the secreted. In Homo sapiens (Human), this protein is Insulin growth factor-like family member 4 (IGFL4).